Consider the following 253-residue polypeptide: Imidazole glycerol phosphate synthase subunit HisF (253 aa).

Active-site residues include aspartate 11 and aspartate 130.

The protein belongs to the HisA/HisF family. As to quaternary structure, heterodimer of HisH and HisF.

It is found in the cytoplasm. The enzyme catalyses 5-[(5-phospho-1-deoxy-D-ribulos-1-ylimino)methylamino]-1-(5-phospho-beta-D-ribosyl)imidazole-4-carboxamide + L-glutamine = D-erythro-1-(imidazol-4-yl)glycerol 3-phosphate + 5-amino-1-(5-phospho-beta-D-ribosyl)imidazole-4-carboxamide + L-glutamate + H(+). The protein operates within amino-acid biosynthesis; L-histidine biosynthesis; L-histidine from 5-phospho-alpha-D-ribose 1-diphosphate: step 5/9. Functionally, IGPS catalyzes the conversion of PRFAR and glutamine to IGP, AICAR and glutamate. The HisF subunit catalyzes the cyclization activity that produces IGP and AICAR from PRFAR using the ammonia provided by the HisH subunit. This chain is Imidazole glycerol phosphate synthase subunit HisF, found in Ruminiclostridium cellulolyticum (strain ATCC 35319 / DSM 5812 / JCM 6584 / H10) (Clostridium cellulolyticum).